A 335-amino-acid chain; its full sequence is Putative type I specificity subunit S.MpnORF89P (335 aa).

This sequence belongs to the type-I restriction system S methylase family. In terms of assembly, the methyltransferase is composed of M and S polypeptides.

Its function is as follows. The specificity (S) subunit of a type I methyltransferase (MTase); this subunit dictates DNA sequence specificity. The single R subunit has multiple frameshifts and is probably not expressed. In Mycoplasma pneumoniae (strain ATCC 29342 / M129 / Subtype 1) (Mycoplasmoides pneumoniae), this protein is Putative type I specificity subunit S.MpnORF89P.